We begin with the raw amino-acid sequence, 273 residues long: HTH-type transcriptional activator RhaS (273 aa).

An HTH araC/xylS-type domain is found at 174–272; that stretch reads YQLLDWLQNN…SQSPRDLRSQ (99 aa). 2 consecutive DNA-binding regions (H-T-H motif) follow at residues 191–212 and 239–262; these read PELA…KNKT and VTDI…KREF.

In terms of assembly, binds DNA as a dimer.

It localises to the cytoplasm. Activates expression of the rhaBAD and rhaT operons. This is HTH-type transcriptional activator RhaS from Yersinia pseudotuberculosis serotype I (strain IP32953).